The chain runs to 295 residues: Lipase 2 (295 aa).

The first 31 residues, 1 to 31, serve as a signal peptide directing secretion; that stretch reads MPKPALRRVMTATVAAVGTLALGLTDATAHA. The active-site Nucleophile is the Ser-48. 3 disulfides stabilise this stretch: Cys-65/Cys-89, Cys-138/Cys-152, and Cys-205/Cys-254. Residue His-275 is part of the active site.

Belongs to the 'GDSL' lipolytic enzyme family. Monomer.

It localises to the secreted. The catalysed reaction is a triacylglycerol + H2O = a diacylglycerol + a fatty acid + H(+). Strongly inhibited by Ag(+). The cations Ca(2+) and Mg(2+) do not significantly reduce the lipolytic activity of SCO7513, whereas high concentrations of Co(2+) and Cu(2+) partially inhibit it. Is not inhibited by DTT in vitro. Is resistant to PMSF inhibition, except in the presence of Ca(2+). Its function is as follows. Catalyzes the hydrolysis of fatty acid esters with a preference for long chain fatty acids (C16-C18). The polypeptide is Lipase 2 (Streptomyces coelicolor (strain ATCC BAA-471 / A3(2) / M145)).